A 377-amino-acid chain; its full sequence is Dihydroorotate dehydrogenase (quinone) (377 aa).

Residues 78-82 (AGCDK) and A102 contribute to the FMN site. A substrate-binding site is contributed by K82. 127-130 (NRLG) serves as a coordination point for substrate. Residues N159 and N192 each coordinate FMN. N192 serves as a coordination point for substrate. The active-site Nucleophile is S195. Position 197 (N197) interacts with substrate. FMN contacts are provided by K230 and T258. 259-260 (NT) contacts substrate. Residues G288, G317, and 338 to 339 (YT) contribute to the FMN site.

The protein belongs to the dihydroorotate dehydrogenase family. Type 2 subfamily. Monomer. It depends on FMN as a cofactor.

The protein localises to the cell membrane. It carries out the reaction (S)-dihydroorotate + a quinone = orotate + a quinol. Its pathway is pyrimidine metabolism; UMP biosynthesis via de novo pathway; orotate from (S)-dihydroorotate (quinone route): step 1/1. Functionally, catalyzes the conversion of dihydroorotate to orotate with quinone as electron acceptor. The protein is Dihydroorotate dehydrogenase (quinone) of Rippkaea orientalis (strain PCC 8801 / RF-1) (Cyanothece sp. (strain PCC 8801)).